Consider the following 380-residue polypeptide: Succinate--CoA ligase [ADP-forming] subunit beta 2 (380 aa).

The 227-residue stretch at 9–235 (KQIFSKHGIR…YTEADQMERI (227 aa)) folds into the ATP-grasp domain. Residues lysine 45, 52–54 (GRG), glutamate 91, isoleucine 94, and glutamate 99 contribute to the ATP site. Positions 191 and 204 each coordinate Mg(2+). Residues asparagine 255 and 312–314 (GIT) each bind substrate.

This sequence belongs to the succinate/malate CoA ligase beta subunit family. Heterotetramer of two alpha and two beta subunits. The cofactor is Mg(2+).

It catalyses the reaction succinate + ATP + CoA = succinyl-CoA + ADP + phosphate. It carries out the reaction GTP + succinate + CoA = succinyl-CoA + GDP + phosphate. It functions in the pathway carbohydrate metabolism; tricarboxylic acid cycle; succinate from succinyl-CoA (ligase route): step 1/1. Its function is as follows. Succinyl-CoA synthetase functions in the citric acid cycle (TCA), coupling the hydrolysis of succinyl-CoA to the synthesis of either ATP or GTP and thus represents the only step of substrate-level phosphorylation in the TCA. The beta subunit provides nucleotide specificity of the enzyme and binds the substrate succinate, while the binding sites for coenzyme A and phosphate are found in the alpha subunit. In Archaeoglobus fulgidus (strain ATCC 49558 / DSM 4304 / JCM 9628 / NBRC 100126 / VC-16), this protein is Succinate--CoA ligase [ADP-forming] subunit beta 2.